The following is a 425-amino-acid chain: Serine hydroxymethyltransferase (425 aa).

(6S)-5,6,7,8-tetrahydrofolate is bound by residues Leu122 and 126–128 (GHL). Residue Lys231 is modified to N6-(pyridoxal phosphate)lysine. (6S)-5,6,7,8-tetrahydrofolate is bound at residue 355–357 (SPF).

It belongs to the SHMT family. Homodimer. It depends on pyridoxal 5'-phosphate as a cofactor.

The protein localises to the cytoplasm. The enzyme catalyses (6R)-5,10-methylene-5,6,7,8-tetrahydrofolate + glycine + H2O = (6S)-5,6,7,8-tetrahydrofolate + L-serine. Its pathway is one-carbon metabolism; tetrahydrofolate interconversion. The protein operates within amino-acid biosynthesis; glycine biosynthesis; glycine from L-serine: step 1/1. In terms of biological role, catalyzes the reversible interconversion of serine and glycine with tetrahydrofolate (THF) serving as the one-carbon carrier. This reaction serves as the major source of one-carbon groups required for the biosynthesis of purines, thymidylate, methionine, and other important biomolecules. Also exhibits THF-independent aldolase activity toward beta-hydroxyamino acids, producing glycine and aldehydes, via a retro-aldol mechanism. In Rippkaea orientalis (strain PCC 8801 / RF-1) (Cyanothece sp. (strain PCC 8801)), this protein is Serine hydroxymethyltransferase.